The sequence spans 186 residues: Large ribosomal subunit protein bL9 (186 aa).

The segment at 153-186 (ELRQVKSQSQKSQQQEAKQNEVGEATDSDKADQK) is disordered. Positions 157–169 (VKSQSQKSQQQEA) are enriched in low complexity.

Belongs to the bacterial ribosomal protein bL9 family.

In terms of biological role, binds to the 23S rRNA. The protein is Large ribosomal subunit protein bL9 of Wolbachia sp. subsp. Brugia malayi (strain TRS).